The following is a 113-amino-acid chain: U-scoloptoxin(16)-Sa1a (113 aa).

The signal sequence occupies residues 1-29; that stretch reads MAPPSNPLFVVLCWALFAYLMLVLRDIQA.

The protein belongs to the scoloptoxin-16 family. Post-translationally, contains 4 disulfide bonds. Expressed by the venom gland.

It is found in the secreted. This chain is U-scoloptoxin(16)-Sa1a, found in Scolopendra alternans (Florida Keys giant centipede).